The sequence spans 153 residues: Ribosome maturation factor RimP (153 aa).

The protein belongs to the RimP family.

It is found in the cytoplasm. In terms of biological role, required for maturation of 30S ribosomal subunits. This is Ribosome maturation factor RimP from Histophilus somni (strain 2336) (Haemophilus somnus).